The sequence spans 290 residues: Syntaxin-2 (290 aa).

Residues 1-266 (MRDRLPDLTA…KYQSKARRKK (266 aa)) lie on the Cytoplasmic side of the membrane. Ser-14 carries the post-translational modification Phosphoserine. Residues 69-106 (EGKIKEELEDLNKEIKKTANRIRGKLKAIEQSCDQDEN) are a coiled coil. Residues 193 to 255 (LNEIESRHKD…EHAKEETKKA (63 aa)) enclose the t-SNARE coiled-coil homology domain. The helical; Anchor for type IV membrane protein transmembrane segment at 267–290 (WIIAAVVVAVIAVLALIIGLTVGK) threads the bilayer.

It belongs to the syntaxin family. Interacts with SYT6 and SYT8; the interaction is Ca(2+)-dependent. As to expression, heart, spleen, liver, and testis.

Its subcellular location is the membrane. In terms of biological role, essential for epithelial morphogenesis. May mediate Ca(2+)-regulation of exocytosis acrosomal reaction in sperm. The polypeptide is Syntaxin-2 (Stx2) (Rattus norvegicus (Rat)).